Reading from the N-terminus, the 173-residue chain is Cytochrome c homolog (173 aa).

Residues 1-8 (MSGKELNK) lie on the Cytoplasmic side of the membrane. The helical; Signal-anchor transmembrane segment at 9 to 29 (IVAAILFASLIAMMVGFIANI) threads the bilayer. The Periplasmic portion of the chain corresponds to 30–173 (LYKPVLEPKH…LFLKTYVHDK (144 aa)). Heme c contacts are provided by Cys82, Cys85, His86, and Met148.

It belongs to the cytochrome c family. Binds 1 heme c group covalently per subunit.

Its subcellular location is the cell membrane. In terms of biological role, may be involved in electron transfer from bc1 complex to aa3. The polypeptide is Cytochrome c homolog (cycM) (Rickettsia bellii (strain RML369-C)).